The primary structure comprises 571 residues: DExH-box ATP-dependent RNA helicase DExH16, mitochondrial (571 aa).

A mitochondrion-targeting transit peptide spans 1–56; sequence MAYSVVRLRKVSALGISRVLQADKGSLWRFHFEPEFGDLLRLGVLTRNYRKNSGSP. The region spanning 83 to 212 is the Helicase ATP-binding domain; it reads IARKKKRKVI…HLCGDPAVVP (130 aa). 96–103 serves as a coordination point for ATP; the sequence is GPTNSGKT. The short motif at 176–179 is the DEIH box; degenerate element; it reads DEIQ. The 187-residue stretch at 213–399 folds into the Helicase C-terminal domain; it reads LVEDILKVTG…GLFPTFDLLS (187 aa).

This sequence belongs to the DExH box helicase family. Homodimer; in free form. Component of the mitochondrial degradosome (mtEXO) complex which is a heteropentamer containing 2 copies of SUPV3L1 and 3 copies of PNPT1. Mg(2+) is required as a cofactor. The cofactor is Mn(2+). As to expression, weakly expressed.

Its subcellular location is the nucleus. It is found in the mitochondrion matrix. The protein localises to the mitochondrion nucleoid. It carries out the reaction ATP + H2O = ADP + phosphate + H(+). With respect to regulation, activated by the presence of mitochondrial RNA. In terms of biological role, major helicase player in mitochondrial RNA metabolism. Component of the mitochondrial degradosome (mtEXO) complex, that degrades 3' overhang double-stranded RNA with a 3'-to-5' directionality in an ATP-dependent manner. ATPase and ATP-dependent multisubstrate helicase, able to unwind double-stranded (ds) DNA and RNA, and RNA/DNA heteroduplexes in the 5'-to-3' direction. Plays a role in the RNA surveillance system in mitochondria; regulates the stability of mature mRNAs, the removal of aberrantly formed mRNAs and the rapid degradation of non coding processing intermediates. Required during pollen development. The chain is DExH-box ATP-dependent RNA helicase DExH16, mitochondrial from Arabidopsis thaliana (Mouse-ear cress).